The primary structure comprises 211 residues: Inactive ribonuclease-like protein 10 (211 aa).

A signal peptide spans 1–24; sequence MKLTLVQIFFMMLLLLLGLGVGLG.

The protein belongs to the pancreatic ribonuclease family. Post-translationally, the N-terminus is blocked. Glycosylated.

The protein localises to the secreted. Functionally, secreted proximal epididymal protein required for post-testicular sperm maturation and male fertility. May be involved in sperm adhesion to the egg zona pellucida. Does not have ribonuclease activity. This is Inactive ribonuclease-like protein 10 (RNASE10) from Bos taurus (Bovine).